The sequence spans 210 residues: Imidazoleglycerol-phosphate dehydratase (210 aa).

It belongs to the imidazoleglycerol-phosphate dehydratase family.

The protein localises to the cytoplasm. The enzyme catalyses D-erythro-1-(imidazol-4-yl)glycerol 3-phosphate = 3-(imidazol-4-yl)-2-oxopropyl phosphate + H2O. It functions in the pathway amino-acid biosynthesis; L-histidine biosynthesis; L-histidine from 5-phospho-alpha-D-ribose 1-diphosphate: step 6/9. This chain is Imidazoleglycerol-phosphate dehydratase, found in Mycobacterium bovis (strain ATCC BAA-935 / AF2122/97).